The chain runs to 249 residues: Ribosomal RNA small subunit methyltransferase J (249 aa).

Residue aspartate 169 coordinates S-adenosyl-L-methionine.

Belongs to the methyltransferase superfamily. RsmJ family.

It localises to the cytoplasm. It catalyses the reaction guanosine(1516) in 16S rRNA + S-adenosyl-L-methionine = N(2)-methylguanosine(1516) in 16S rRNA + S-adenosyl-L-homocysteine + H(+). Its function is as follows. Specifically methylates the guanosine in position 1516 of 16S rRNA. The sequence is that of Ribosomal RNA small subunit methyltransferase J from Buchnera aphidicola subsp. Schizaphis graminum (strain Sg).